The chain runs to 303 residues: MDWTSYHDYDEINAWLDSLATDYPELASVEDVGLSYEGRTMKLLKLGKGGADKPIIFIDGGIHAREWIAPSTVTYIVNEFVSNSATYDDILSNVNFYVMPTINPDGYAYTFTDDRLWRKTRSETGSVLGCKGADPNRNWSFHWDEVGASDSPCSDIYAGPEPFSEVEMRNVRDQILEYAANIKVYLTFHSYSQLWMYPWGFTSDLPDDWQDLDTLATNAVDALTAVHGTRYEIGSSTNTIYAAAGGSDDWAKGEGGVKYAYTIELRDTGNYGFLLPENQIIPTGEETFEGVKVVANFVKDTYS.

Residues 5–298 (SYHDYDEINA…EGVKVVANFV (294 aa)) form the Peptidase M14 domain. His-63 and Glu-66 together coordinate Zn(2+). Residues 63-66 (HARE), Arg-118, and 136-137 (NR) each bind substrate. His-189 lines the Zn(2+) pocket. Residues 190–191 (SY) and Tyr-241 each bind substrate. Glu-264 acts as the Proton donor/acceptor in catalysis.

This sequence belongs to the peptidase M14 family. It depends on Zn(2+) as a cofactor.

It localises to the secreted. It carries out the reaction Preferential release of a C-terminal lysine or arginine amino acid.. This chain is Carboxypeptidase B, found in Astacus astacus (Noble crayfish).